The following is a 387-amino-acid chain: Succinate--CoA ligase [ADP-forming] subunit beta (387 aa).

The 236-residue stretch at 9–244 folds into the ATP-grasp domain; the sequence is KQLFASYGLP…VSQEDDRENR (236 aa). ATP-binding positions include Lys46, 53 to 55, Glu99, Cys102, and Glu107; that span reads GRG. Mg(2+)-binding residues include Asn199 and Asp213. Substrate is bound by residues Asn264 and 321–323; that span reads GIV.

It belongs to the succinate/malate CoA ligase beta subunit family. Heterotetramer of two alpha and two beta subunits. Requires Mg(2+) as cofactor.

It catalyses the reaction succinate + ATP + CoA = succinyl-CoA + ADP + phosphate. The enzyme catalyses GTP + succinate + CoA = succinyl-CoA + GDP + phosphate. Its pathway is carbohydrate metabolism; tricarboxylic acid cycle; succinate from succinyl-CoA (ligase route): step 1/1. Succinyl-CoA synthetase functions in the citric acid cycle (TCA), coupling the hydrolysis of succinyl-CoA to the synthesis of either ATP or GTP and thus represents the only step of substrate-level phosphorylation in the TCA. The beta subunit provides nucleotide specificity of the enzyme and binds the substrate succinate, while the binding sites for coenzyme A and phosphate are found in the alpha subunit. The chain is Succinate--CoA ligase [ADP-forming] subunit beta from Legionella pneumophila (strain Paris).